Reading from the N-terminus, the 323-residue chain is ComG operon protein 2 homolog (323 aa).

The next 4 membrane-spanning stretches (helical) occupy residues 93-113 (YPLL…YFVL), 141-161 (LPWL…TYFV), 188-208 (VITC…LSIM), and 296-316 (IVFS…MLPV).

It belongs to the GSP F family.

It localises to the cell membrane. Functionally, required for transformation and DNA binding. The chain is ComG operon protein 2 homolog (comGB) from Halalkalibacterium halodurans (strain ATCC BAA-125 / DSM 18197 / FERM 7344 / JCM 9153 / C-125) (Bacillus halodurans).